A 115-amino-acid chain; its full sequence is Ribonuclease P protein component (115 aa).

Belongs to the RnpA family. Consists of a catalytic RNA component (M1 or rnpB) and a protein subunit.

The enzyme catalyses Endonucleolytic cleavage of RNA, removing 5'-extranucleotides from tRNA precursor.. In terms of biological role, RNaseP catalyzes the removal of the 5'-leader sequence from pre-tRNA to produce the mature 5'-terminus. It can also cleave other RNA substrates such as 4.5S RNA. The protein component plays an auxiliary but essential role in vivo by binding to the 5'-leader sequence and broadening the substrate specificity of the ribozyme. This is Ribonuclease P protein component from Phytoplasma australiense.